Here is a 100-residue protein sequence, read N- to C-terminus: Large ribosomal subunit protein bL21 (100 aa).

This sequence belongs to the bacterial ribosomal protein bL21 family. Part of the 50S ribosomal subunit. Contacts protein L20.

In terms of biological role, this protein binds to 23S rRNA in the presence of protein L20. In Mycoplasmoides gallisepticum (strain R(low / passage 15 / clone 2)) (Mycoplasma gallisepticum), this protein is Large ribosomal subunit protein bL21.